A 1072-amino-acid polypeptide reads, in one-letter code: DNA-directed RNA polymerase subunit beta (1072 aa).

The protein belongs to the RNA polymerase beta chain family. In terms of assembly, in plastids the minimal PEP RNA polymerase catalytic core is composed of four subunits: alpha, beta, beta', and beta''. When a (nuclear-encoded) sigma factor is associated with the core the holoenzyme is formed, which can initiate transcription.

Its subcellular location is the plastid. The protein localises to the chloroplast. The catalysed reaction is RNA(n) + a ribonucleoside 5'-triphosphate = RNA(n+1) + diphosphate. Its function is as follows. DNA-dependent RNA polymerase catalyzes the transcription of DNA into RNA using the four ribonucleoside triphosphates as substrates. The sequence is that of DNA-directed RNA polymerase subunit beta from Amborella trichopoda.